Reading from the N-terminus, the 696-residue chain is Tegument protein UL47 (696 aa).

2 stretches are compositionally biased toward basic residues: residues 1–15 (MSVR…RAST) and 70–81 (RRRREARGHPGS). Disordered regions lie at residues 1 to 39 (MSVR…GGVG) and 54 to 130 (SEVE…YLGP). An RNA-binding region spans residues 57 to 84 (EAAGEMASEEPPPRRRREARGHPGSRRA). Positions 70-84 (RRRREARGHPGSRRA) match the Nuclear localization signal motif. Positions 87 to 103 (ARAAAPPRRASFPRPRS) are enriched in low complexity. The Nuclear export signal motif lies at 650–673 (SVLGPRVRVVDIMAQFRKLLMGDE).

It belongs to the alphaherpesvirinae HHV-1 UL47 family. Interacts with US3 kinase. Interacts with UL31 and UL34; these interactions seem important for efficient virion nuclear egress. Interacts with UL41/VHS. Phosphorylated by US3. This phosphorylation is required for proper nuclear localization.

The protein localises to the virion tegument. It is found in the host nucleus. The protein resides in the host cytoplasm. Its function is as follows. Tegument protein that can bind to various RNA transcripts. Plays a role in the attenuation of selective viral and cellular mRNA degradation by modulating the activity of host shutoff RNase UL41/VHS. Also plays a role in the primary envelopment of virions in the perinuclear space, probably by interacting with two nuclear egress proteins UL31 and UL34. This is Tegument protein UL47 from Human herpesvirus 2 (strain HG52) (HHV-2).